A 354-amino-acid chain; its full sequence is Uroporphyrinogen decarboxylase (354 aa).

Substrate-binding positions include Arg27 to Arg31, Asp77, Tyr154, Thr209, and His327.

The protein belongs to the uroporphyrinogen decarboxylase family. In terms of assembly, homodimer.

The protein resides in the cytoplasm. It carries out the reaction uroporphyrinogen III + 4 H(+) = coproporphyrinogen III + 4 CO2. Its pathway is porphyrin-containing compound metabolism; protoporphyrin-IX biosynthesis; coproporphyrinogen-III from 5-aminolevulinate: step 4/4. Functionally, catalyzes the decarboxylation of four acetate groups of uroporphyrinogen-III to yield coproporphyrinogen-III. In Actinobacillus succinogenes (strain ATCC 55618 / DSM 22257 / CCUG 43843 / 130Z), this protein is Uroporphyrinogen decarboxylase.